Reading from the N-terminus, the 589-residue chain is Guanylate-binding protein 1 (589 aa).

The tract at residues 1 to 309 (MASEIHMSEP…SAICSGELPC (309 aa)) is GTPase domain (Globular). The GB1/RHD3-type G domain occupies 35-276 (TQPVVVVAIV…FTSYIFSYSG (242 aa)). Residues 47 to 53 (YRTGKSY), 67 to 69 (LGS), and 97 to 101 (DTEGL) contribute to the GTP site. Residue serine 156 is modified to Phosphoserine. Cysteine 586 is subject to Cysteine methyl ester. Cysteine 586 is lipidated: S-farnesyl cysteine. Cysteine 586 carries the S-geranylgeranyl cysteine; partial lipid modification. Threonine 587 bears the Phosphothreonine mark. The propeptide at 587 to 589 (TIL) is removed in mature form.

Belongs to the TRAFAC class dynamin-like GTPase superfamily. GB1/RHD3 GTPase family. GB1 subfamily. As to quaternary structure, homodimer; homodimerization occurs upon GTP-binding and is required for the second hydrolysis step from GDP to GMP. Undergoes conformational changes and oligomerization upon GTP-binding and hydrolysis. Heterodimer with other family members, including GBP2, GBP3, GBP4 and GBP5. Dimerization regulates subcellular location to membranous structures. Interacts with SQSTM1. Interacts (when phosphorylated) with 14-3-3 protein sigma (SFN); leading to GBP1 retention in the cytosol and inactivation. Post-translationally, isoprenylation of mouse GBP1 is incomplete. It persistently exists in the cell as a mixture of C20-modified and (more predominantly) unmodified form. Isoprenylation is required for proper subcellular location. In terms of processing, phosphorylated at Ser-156 by PIM1 in absence of infection, inhibits GBP1: phosphorylation promotes interaction with 14-3-3 protein sigma (SFN), leading to GBP1 retention in the cytosol. Dephosphorylated in response to infection, liberating GBP1.

The protein resides in the cytoplasmic vesicle membrane. It is found in the golgi apparatus membrane. It localises to the cell membrane. Its subcellular location is the cytoplasm. The protein localises to the cytosol. The protein resides in the secreted. It carries out the reaction GTP + H2O = GDP + phosphate + H(+). The enzyme catalyses GDP + H2O = GMP + phosphate + H(+). Its function is as follows. Interferon (IFN)-inducible GTPase that plays important roles in innate immunity against a diverse range of bacterial, viral and protozoan pathogens. Hydrolyzes GTP to GMP in two consecutive cleavage reactions: GTP is first hydrolyzed to GDP and then to GMP in a processive manner. Following infection, recruited to the pathogen-containing vacuoles or vacuole-escaped bacteria and promotes both inflammasome assembly and autophagy. Acts as a positive regulator of inflammasome assembly by facilitating the detection of inflammasome ligands from pathogens. Involved in the lysis of pathogen-containing vacuoles, releasing pathogens into the cytosol. Following pathogen release in the cytosol, forms a protein coat in a GTPase-dependent manner that encapsulates pathogens and promotes the detection of ligands by pattern recognition receptors. Plays a key role in inflammasome assembly in response to infection by Gram-negative bacteria: following pathogen release in the cytosol, forms a protein coat that encapsulates Gram-negative bacteria and directly binds to lipopolysaccharide (LPS), disrupting the O-antigen barrier and unmasking lipid A that is that detected by the non-canonical inflammasome effector CASP4/CASP11. Also promotes recruitment of proteins that mediate bacterial cytolysis, leading to release double-stranded DNA (dsDNA) that activates the AIM2 inflammasome. Involved in autophagy by regulating bacteriolytic peptide generation via its interaction with ubiquitin-binding protein SQSTM1, which delivers monoubiquitinated proteins to autolysosomes for the generation of bacteriolytic peptides. Confers protection to several pathogens, including the bacterial pathogens L.monocytogenes and M.bovis BCG as well as the protozoan pathogen T.gondii. Exhibits antiviral activity against influenza virus. The sequence is that of Guanylate-binding protein 1 (Gbp1) from Mus musculus (Mouse).